The primary structure comprises 160 residues: uncharacterized protein (160 aa).

Positions 7–151 (LLINYKTLEE…NPLIWHPDMD (145 aa)) constitute an N-acetyltransferase domain.

This is an uncharacterized protein from Bacillus subtilis (strain 168).